The primary structure comprises 270 residues: Glucosamine-6-phosphate deaminase (270 aa).

Catalysis depends on Asp72, which acts as the Proton acceptor; for enolization step. Residue Asp141 is the For ring-opening step of the active site. The active-site Proton acceptor; for ring-opening step is the His143. Residue Glu148 is the For ring-opening step of the active site.

Belongs to the glucosamine/galactosamine-6-phosphate isomerase family. NagB subfamily.

It catalyses the reaction alpha-D-glucosamine 6-phosphate + H2O = beta-D-fructose 6-phosphate + NH4(+). It participates in amino-sugar metabolism; N-acetylneuraminate degradation; D-fructose 6-phosphate from N-acetylneuraminate: step 5/5. Allosterically activated by N-acetylglucosamine 6-phosphate (GlcNAc6P). In terms of biological role, catalyzes the reversible isomerization-deamination of glucosamine 6-phosphate (GlcN6P) to form fructose 6-phosphate (Fru6P) and ammonium ion. This chain is Glucosamine-6-phosphate deaminase, found in Bacteroides fragilis (strain ATCC 25285 / DSM 2151 / CCUG 4856 / JCM 11019 / LMG 10263 / NCTC 9343 / Onslow / VPI 2553 / EN-2).